A 260-amino-acid chain; its full sequence is Protein phosphatase 1 regulatory subunit 35 (260 aa).

Residues Met-1–Asp-100 form a disordered region. Phosphoserine occurs at positions 46 and 53. The segment covering Arg-64–Gln-76 has biased composition (basic residues).

The protein belongs to the PPP1R35 family. In terms of assembly, interacts with PPP1CA; this interaction mediates the PPP1CA phosphatase activity inhibition. Interacts with RTTN; this interaction allows the mutual recruitment to the centriole.

It is found in the cytoplasm. It localises to the cytoskeleton. The protein localises to the microtubule organizing center. Its subcellular location is the centrosome. The protein resides in the centriole. Functionally, during centriole duplication, plays a role in the centriole elongation by promoting the recruitment of the microtubule-binding elongation machinery through its interaction with TTTN, leading to the centriole to centrosome conversion. In addition may play a role in the primary cilia assembly. The sequence is that of Protein phosphatase 1 regulatory subunit 35 from Mus musculus (Mouse).